The chain runs to 375 residues: Alcohol dehydrogenase 1A (375 aa).

Ser-2 is modified (N-acetylserine). A Phosphoserine modification is found at Ser-23. Cys-47 is a binding site for Zn(2+). 48–52 (GTDDH) is an NAD(+) binding site. Positions 68, 98, 101, 104, 112, and 175 each coordinate Zn(2+). NAD(+) is bound by residues 200–205 (GLGGVG), Asp-224, Lys-229, Ile-270, 293–295 (VGV), 318–320 (AVL), and Arg-370.

This sequence belongs to the zinc-containing alcohol dehydrogenase family. In terms of assembly, dimer of identical or heterodimer of closely related subunits alpha, beta, or gamma that are encoded by genes ADH1A, ADH1B, and ADH1C, respectively. The cofactor is Zn(2+).

Its subcellular location is the cytoplasm. It catalyses the reaction a primary alcohol + NAD(+) = an aldehyde + NADH + H(+). The catalysed reaction is a secondary alcohol + NAD(+) = a ketone + NADH + H(+). The enzyme catalyses butan-1-ol + NAD(+) = butanal + NADH + H(+). It carries out the reaction 1-propanol + NAD(+) = propanal + NADH + H(+). In terms of biological role, alcohol dehydrogenase. Oxidizes primary as well as secondary alcohols. Ethanol is a very poor substrate. The polypeptide is Alcohol dehydrogenase 1A (ADH1A) (Pongo abelii (Sumatran orangutan)).